Reading from the N-terminus, the 337-residue chain is tRNA N(3)-cytidine methyltransferase METTL2 (337 aa).

Residues W66, Y70, G140, D165, D191, and I212 each contribute to the S-adenosyl-L-methionine site.

This sequence belongs to the methyltransferase superfamily. METL family. Monomer.

The protein localises to the cytoplasm. The catalysed reaction is cytidine(32) in tRNA(Thr) + S-adenosyl-L-methionine = N(3)-methylcytidine(32) in tRNA(Thr) + S-adenosyl-L-homocysteine + H(+). It carries out the reaction cytidine(32) in tRNA(Arg)(CCU) + S-adenosyl-L-methionine = N(3)-methylcytidine(32) in tRNA(Arg)(CCU) + S-adenosyl-L-homocysteine + H(+). S-adenosyl-L-methionine-dependent methyltransferase that mediates N(3)-methylcytidine modification of residue 32 of the tRNA anticodon loop of tRNA(Thr)(UGU) and tRNA(Arg)(CCU). N(3)-methylcytidine methylation by mettl2 requires the N6-threonylcarbamoylation of tRNA (t6A37) by the EKC/KEOPS complex as prerequisite. This Xenopus tropicalis (Western clawed frog) protein is tRNA N(3)-cytidine methyltransferase METTL2 (mettl2).